A 1482-amino-acid polypeptide reads, in one-letter code: Glutamate receptor ionotropic, NMDA 2B (1482 aa).

The first 26 residues, methionine 1 to alanine 26, serve as a signal peptide directing secretion. Over arginine 27–aspartate 557 the chain is Extracellular. N-linked (GlcNAc...) asparagine glycosylation occurs at asparagine 74. An intrachain disulfide couples cysteine 86 to cysteine 321. Zn(2+)-binding residues include histidine 127 and glutamate 284. Residues asparagine 341, asparagine 348, asparagine 444, and asparagine 491 are each glycosylated (N-linked (GlcNAc...) asparagine). Disulfide bonds link cysteine 429/cysteine 456 and cysteine 436/cysteine 457. L-glutamate contacts are provided by threonine 514 and arginine 519. A glycan (N-linked (GlcNAc...) asparagine) is linked at asparagine 542. The chain crosses the membrane as a helical span at residues valine 558 to valine 576. Residues phenylalanine 577 to glycine 603 lie on the Cytoplasmic side of the membrane. An intramembrane region (discontinuously helical) is located at residues lysine 604–proline 623. The segment at lysine 604 to proline 623 is pore-forming. The Cytoplasmic portion of the chain corresponds to lysine 624 to isoleucine 630. Residues methionine 631–tyrosine 646 traverse the membrane as a helical segment. Topologically, residues threonine 647–asparagine 817 are extracellular. N-linked (GlcNAc...) asparagine glycosylation is present at asparagine 688. L-glutamate contacts are provided by residues serine 690–threonine 691 and aspartate 732. An intrachain disulfide couples cysteine 746 to cysteine 801. The helical transmembrane segment at methionine 818–isoleucine 837 threads the bilayer. At cysteine 838–valine 1482 the chain is on the cytoplasmic side. Phosphoserine occurs at positions 882, 886, 917, and 920. Residues tyrosine 962 and tyrosine 1039 each carry the phosphotyrosine modification. 3 positions are modified to phosphoserine: serine 1058, serine 1061, and serine 1064. The disordered stretch occupies residues glutamate 1074–lysine 1097. Phosphotyrosine is present on residues tyrosine 1109 and tyrosine 1133. At serine 1143 the chain carries Phosphoserine. Tyrosine 1155 is modified (phosphotyrosine). A disordered region spans residues phenylalanine 1162 to proline 1194. 2 positions are modified to phosphoserine: serine 1255 and serine 1259. Low complexity predominate over residues proline 1266–serine 1277. The disordered stretch occupies residues proline 1266–glutamine 1301. Over residues threonine 1278–lysine 1289 the composition is skewed to polar residues. Over residues alanine 1290–glutamine 1301 the composition is skewed to basic residues. An interaction with DAPK1 region spans residues lysine 1292–tyrosine 1304. Serine 1303 is subject to Phosphoserine; by DAPK1. The residue at position 1472 (tyrosine 1472) is a Phosphotyrosine. The short motif at serine 1480–valine 1482 is the PDZ-binding element.

Belongs to the glutamate-gated ion channel (TC 1.A.10.1) family. NR2B/GRIN2B subfamily. In terms of assembly, heterotetramer. Forms heterotetrameric channels composed of two GluN1/zeta subunits (GRIN1), and two identical GluN2/epsilon subunits (GRIN2A, GRIN2B, GRIN2C or GRIN2D) or GluN3 subunits (GRIN3A or GRIN3B) (in vitro). Can also form heterotetrameric channels that contain at least two GluN1 subunits and at least two different GluN2 subunits (or a combination of one GluN2 and one GluN3 subunits) (in vitro). In vivo, the subunit composition may depend on the expression levels of the different subunits. Found in a complex with GRIN1, GRIN3A and PPP2CB. Interacts with MAGI3. Interacts with HIP1 and NETO1. Interacts with PDZ domains of PATJ, DLG3 and DLG4. Interacts with DAPK1. Found in a complex with GRIN1 and PRR7. Interacts with PRR7. Interacts with CAMK2A. Interacts with ARC; preventing ARC oligomerization. Interacts with TMEM25. Interacts (via the extreme C-terminus) with FRMPD2 (via the second PDZ domain); the interaction is direct and is likely to promote NMDAR-mediated neural signal transmission. GRIN2A binds FRMPD2 with lower affinity than GRIN2B. Interacts with FAM81A; the interaction facilitates condensate formation via liquid-liquid phase separation. In terms of processing, phosphorylated on tyrosine residues. Phosphorylation at Ser-1303 by DAPK1 enhances synaptic NMDA receptor channel activity. In terms of tissue distribution, detected in brain (at protein level). Detected throughout the brain, and in brain stem trigeminal nucleus. Detected in forebrain.

It is found in the cell membrane. It localises to the postsynaptic cell membrane. The protein localises to the cell projection. Its subcellular location is the dendrite. The protein resides in the late endosome. It is found in the lysosome. It localises to the cytoplasm. The protein localises to the cytoskeleton. The enzyme catalyses Ca(2+)(in) = Ca(2+)(out). The catalysed reaction is Na(+)(in) = Na(+)(out). It carries out the reaction K(+)(in) = K(+)(out). Component of N-methyl-D-aspartate (NMDA) receptors (NMDARs) that function as heterotetrameric, ligand-gated cation channels with high calcium permeability and voltage-dependent block by Mg(2+). Participates in synaptic plasticity for learning and memory formation by contributing to the long-term depression (LTD) of hippocampus membrane currents. Channel activation requires binding of the neurotransmitter L-glutamate to the GluN2 subunit, glycine or D-serine binding to the GluN1 subunit, plus membrane depolarization to eliminate channel inhibition by Mg(2+). NMDARs mediate simultaneously the potasium efflux and the influx of calcium and sodium. Each GluN2 subunit confers differential attributes to channel properties, including activation, deactivation and desensitization kinetics, pH sensitivity, Ca2(+) permeability, and binding to allosteric modulators. In concert with DAPK1 at extrasynaptic sites, acts as a central mediator for stroke damage. Its phosphorylation at Ser-1303 by DAPK1 enhances synaptic NMDA receptor channel activity inducing injurious Ca2+ influx through them, resulting in an irreversible neuronal death. The sequence is that of Glutamate receptor ionotropic, NMDA 2B from Mus musculus (Mouse).